The following is a 403-amino-acid chain: Dual-specificity RNA methyltransferase RlmN (403 aa).

A disordered region spans residues 1–25 (MTKIPMQPADSTPATFHPNAPTKTN). Residue Glu112 is the Proton acceptor of the active site. Positions 123-364 (VNGRKTLCIS…VCTIRQTRGD (242 aa)) constitute a Radical SAM core domain. A disulfide bridge links Cys130 with Cys370. Cys137, Cys141, and Cys144 together coordinate [4Fe-4S] cluster. Residues 193–194 (GE), Ser225, 247–249 (SLH), and Asn327 each bind S-adenosyl-L-methionine. The active-site S-methylcysteine intermediate is the Cys370.

It belongs to the radical SAM superfamily. RlmN family. Requires [4Fe-4S] cluster as cofactor.

The protein resides in the cytoplasm. It carries out the reaction adenosine(2503) in 23S rRNA + 2 reduced [2Fe-2S]-[ferredoxin] + 2 S-adenosyl-L-methionine = 2-methyladenosine(2503) in 23S rRNA + 5'-deoxyadenosine + L-methionine + 2 oxidized [2Fe-2S]-[ferredoxin] + S-adenosyl-L-homocysteine. It catalyses the reaction adenosine(37) in tRNA + 2 reduced [2Fe-2S]-[ferredoxin] + 2 S-adenosyl-L-methionine = 2-methyladenosine(37) in tRNA + 5'-deoxyadenosine + L-methionine + 2 oxidized [2Fe-2S]-[ferredoxin] + S-adenosyl-L-homocysteine. In terms of biological role, specifically methylates position 2 of adenine 2503 in 23S rRNA and position 2 of adenine 37 in tRNAs. m2A2503 modification seems to play a crucial role in the proofreading step occurring at the peptidyl transferase center and thus would serve to optimize ribosomal fidelity. In Psychrobacter sp. (strain PRwf-1), this protein is Dual-specificity RNA methyltransferase RlmN.